The following is a 162-amino-acid chain: MKRLKLLGGVMLFAIVSLMVCGCMVVFPKKYPDVLYKEYDVIKIENRTINGVKTAIVYQVKTEIGARSSPYSLDADSKKDIGAITYYVFKNTDVDEVQIICYYAGGGGLQPYYKFKIKRRDAELSGLLNVSEKELPSATLYYIDKLISLGDLWINDRLPVNG.

A helical membrane pass occupies residues leucine 7–phenylalanine 27.

The protein localises to the membrane. This is an uncharacterized protein from Methanocaldococcus jannaschii (strain ATCC 43067 / DSM 2661 / JAL-1 / JCM 10045 / NBRC 100440) (Methanococcus jannaschii).